The chain runs to 101 residues: RNA-binding protein Hfq (101 aa).

Residues 9–68 (DPFLNALRRERVPVSIYLVNGIKLQGQIESFDQFVILLKNTVSQMVYKHAISTVVPSRPV) enclose the Sm domain. Residues 63 to 101 (VPSRPVSHHNNNPSGGSSNYHHGSTPASQPSQPESDDAE) form a disordered region. Residues 70-86 (HHNNNPSGGSSNYHHGS) are compositionally biased toward low complexity.

It belongs to the Hfq family. In terms of assembly, homohexamer.

RNA chaperone that binds small regulatory RNA (sRNAs) and mRNAs to facilitate mRNA translational regulation in response to envelope stress, environmental stress and changes in metabolite concentrations. Also binds with high specificity to tRNAs. The polypeptide is RNA-binding protein Hfq (Sodalis glossinidius (strain morsitans)).